The primary structure comprises 201 residues: Ribosome maturation factor RimP (201 aa).

Belongs to the RimP family.

Its subcellular location is the cytoplasm. Its function is as follows. Required for maturation of 30S ribosomal subunits. The protein is Ribosome maturation factor RimP of Rhizobium leguminosarum bv. trifolii (strain WSM2304).